The following is an 815-amino-acid chain: DNA gyrase subunit B (815 aa).

The segment at 1–21 (MEKTPATGSAVAPPPVEYGTD) is disordered. One can recognise a Toprim domain in the interval 430 to 545 (SELYIVEGDS…AISTSRSRRS (116 aa)). Mg(2+)-binding residues include E436, D509, and D511.

The protein belongs to the type II topoisomerase GyrB family. In terms of assembly, heterotetramer, composed of two GyrA and two GyrB chains. In the heterotetramer, GyrA contains the active site tyrosine that forms a transient covalent intermediate with DNA, while GyrB binds cofactors and catalyzes ATP hydrolysis. Requires Mg(2+) as cofactor. It depends on Mn(2+) as a cofactor. The cofactor is Ca(2+).

It localises to the cytoplasm. The enzyme catalyses ATP-dependent breakage, passage and rejoining of double-stranded DNA.. A type II topoisomerase that negatively supercoils closed circular double-stranded (ds) DNA in an ATP-dependent manner to modulate DNA topology and maintain chromosomes in an underwound state. Negative supercoiling favors strand separation, and DNA replication, transcription, recombination and repair, all of which involve strand separation. Also able to catalyze the interconversion of other topological isomers of dsDNA rings, including catenanes and knotted rings. Type II topoisomerases break and join 2 DNA strands simultaneously in an ATP-dependent manner. The polypeptide is DNA gyrase subunit B (Myxococcus xanthus).